Reading from the N-terminus, the 121-residue chain is Natriuretic peptides B (121 aa).

An N-terminal signal peptide occupies residues 1–26; it reads MDLQKVLPQMILLLLFLNLSPLGGHS. The cysteines at positions 99 and 115 are disulfide-linked.

It belongs to the natriuretic peptide family. In terms of processing, the precursor molecule is proteolytically cleaved by the endoprotease Furin to produce brain natriuretic peptide 45. May undergo further proteolytic cleavage by various proteases such as DPP4, MME and possibly FAP, to give rise to a variety of shorter peptides. May be cleaved at Ser-91 by the prolyl endopeptidase FAP (seprase) activity (in vitro). May be degraded by IDE. During IDE degradation, the resulting products initially increase the activation of NPR1 and can also stimulate NPR2 to produce cGMP before the fragments are completely degraded and inactivated by IDE (in vitro). Expressed in the atria and ventricles, but at much lower levels than NPPA. Expression levels in the ventricles are slightly higher than in the atria. Very low levels of expression detected in the brain, hypothalamus, lung and aorta. As to expression, atria (at protein level). Cardiocytes (at protein level).

It is found in the secreted. Its function is as follows. Cardiac hormone that plays a key role in mediating cardio-renal homeostasis. May also function as a paracrine antifibrotic factor in the heart. Acts by specifically binding and stimulating NPR1 to produce cGMP, which in turn activates effector proteins that drive various biological responses. Likely involved in regulating the extracellular fluid volume and maintaining the fluid-electrolyte balance through natriuresis, diuresis, kaluresis and chloruresis. The chain is Natriuretic peptides B (Nppb) from Rattus norvegicus (Rat).